A 304-amino-acid chain; its full sequence is MSASYWDSSQRHKWKYTRESLAKEKQKLWLLECQLFPQGLNVTIHDSKANKQVTTNIPVTQRDLHYDRDYNLRIYCYFLIMKLGRRLNIRQCALVTAHVYLSRFLLRASVREVNLYLLITTCIYLACKVEECPQHIRTLVNEARSLWPEFIPPDVTKVTEFEFYLIEELQSYLIVHHPYRSLEQIEKALSSEKYNYKLSDDELQKIWSLINDSYTTDVHLLYSPHVIAISCLFAVSCIIHKPEDSTKRANINMFIAETQVNLEQVMFILQELISLYDHWDKYNELRIRALLHELYLRQQTPAIQ.

The region spanning 43–174 (TIHDSKANKQ…LIEELQSYLI (132 aa)) is the Cyclin N-terminal domain.

The protein belongs to the cyclin family. Cyclin C subfamily. Component of the SRB8-11 complex, a regulatory module of the Mediator complex.

It is found in the nucleus. Its function is as follows. Component of the SRB8-11 complex. The SRB8-11 complex is a regulatory module of the Mediator complex which is itself involved in regulation of basal and activated RNA polymerase II-dependent transcription. The SRB8-11 complex may be involved in the transcriptional repression of a subset of genes regulated by Mediator. It may inhibit the association of the Mediator complex with RNA polymerase II to form the holoenzyme complex. The SRB8-11 complex phosphorylates the C-terminal domain (CTD) of the largest subunit of RNA polymerase II. This is RNA polymerase II holoenzyme cyclin-like subunit (SSN8) from Kluyveromyces lactis (strain ATCC 8585 / CBS 2359 / DSM 70799 / NBRC 1267 / NRRL Y-1140 / WM37) (Yeast).